A 94-amino-acid chain; its full sequence is Large ribosomal subunit protein bL28 (94 aa).

Residues 1 to 21 (MARRCEVTGRGTVSGNNVSHS) form a disordered region. Residues 11–20 (GTVSGNNVSH) are compositionally biased toward polar residues.

Belongs to the bacterial ribosomal protein bL28 family.

This Leptospira interrogans serogroup Icterohaemorrhagiae serovar copenhageni (strain Fiocruz L1-130) protein is Large ribosomal subunit protein bL28.